Here is a 190-residue protein sequence, read N- to C-terminus: Protein GrpE (190 aa).

The span at 1–18 (MTETPNTSSEEIQTSEPS) shows a compositional bias: polar residues. Residues 1-21 (MTETPNTSSEEIQTSEPSPDN) are disordered.

This sequence belongs to the GrpE family. In terms of assembly, homodimer.

Its subcellular location is the cytoplasm. In terms of biological role, participates actively in the response to hyperosmotic and heat shock by preventing the aggregation of stress-denatured proteins, in association with DnaK and GrpE. It is the nucleotide exchange factor for DnaK and may function as a thermosensor. Unfolded proteins bind initially to DnaJ; upon interaction with the DnaJ-bound protein, DnaK hydrolyzes its bound ATP, resulting in the formation of a stable complex. GrpE releases ADP from DnaK; ATP binding to DnaK triggers the release of the substrate protein, thus completing the reaction cycle. Several rounds of ATP-dependent interactions between DnaJ, DnaK and GrpE are required for fully efficient folding. This chain is Protein GrpE, found in Chlamydia trachomatis serovar L2b (strain UCH-1/proctitis).